A 546-amino-acid polypeptide reads, in one-letter code: 6'''-hydroxyparomomycin C oxidase (546 aa).

The interval 1-30 is disordered; that stretch reads MERLRGPSPLENTTARHPAPLGPAHRDGLE. The active-site Proton acceptor is histidine 475.

Belongs to the GMC oxidoreductase family. The cofactor is FAD.

Its pathway is antibiotic biosynthesis; lividomycin biosynthesis. Glucosaminyl-6'-oxidase involved in the biosynthetic pathway of lividomycin by mediating FAD-dependent dehydrogenation of 6'''-hydroxyparomomycin to paromomycin. The protein is 6'''-hydroxyparomomycin C oxidase (livQ) of Streptomyces lividus.